The primary structure comprises 238 residues: Cadherin-2 (238 aa).

Cadherin domains are found at residues 1–46, 47–161, and 162–238; these read TKPL…RPEF, LHQV…PPEF, and TAMT…RMFV. Residues 1 to 238 lie on the Extracellular side of the membrane; the sequence is TKPLDRELIA…IDFETNRMFV (238 aa). Residues D5, E7, D38, M39, N40, D41, and N42 each contribute to the Ca(2+) site. Residue N52 is glycosylated (N-linked (GlcNAc...) asparagine). Ca(2+) is bound by residues D72, D74, and N80. Residue N104 is glycosylated (N-linked (GlcNAc...) asparagine). Ca(2+) is bound at residue D132. N181 carries N-linked (GlcNAc...) asparagine glycosylation.

Homodimer (via extracellular region). Can also form heterodimers with other cadherins (via extracellular region). Dimerization occurs in trans, i.e. with a cadherin chain from another cell. Interacts with CDCP1. Interacts with PCDH8; this complex may also include TAOK2. The interaction with PCDH8 may lead to internalization through TAOK2/p38 MAPK pathway. Identified in a complex containing FGFR4, NCAM1, CDH2, PLCG1, FRS2, SRC, SHC1, GAP43 and CTTN. May interact with OBSCN (via protein kinase domain 2). Post-translationally, cleaved by MMP24. Ectodomain cleavage leads to the generation of a soluble 90 kDa N-terminal soluble fragment and a 45 kDa membrane-bound C-terminal fragment 1 (CTF1), which is further cleaved by gamma-secretase into a 35 kDa. Cleavage in neural stem cells by MMP24 affects CDH2-mediated anchorage of neural stem cells to ependymocytes in the adult subependymal zone, leading to modulate neural stem cell quiescence. In terms of processing, may be phosphorylated by OBSCN.

The protein localises to the cell membrane. It is found in the sarcolemma. The protein resides in the cell junction. It localises to the cell surface. Its subcellular location is the desmosome. The protein localises to the adherens junction. In terms of biological role, calcium-dependent cell adhesion protein; preferentially mediates homotypic cell-cell adhesion by dimerization with a CDH2 chain from another cell. Cadherins may thus contribute to the sorting of heterogeneous cell types. Acts as a regulator of neural stem cells quiescence by mediating anchorage of neural stem cells to ependymocytes in the adult subependymal zone: upon cleavage by MMP24, CDH2-mediated anchorage is affected, leading to modulate neural stem cell quiescence. Plays a role in cell-to-cell junction formation between pancreatic beta cells and neural crest stem (NCS) cells, promoting the formation of processes by NCS cells. Required for proper neurite branching. Required for pre- and postsynaptic organization. CDH2 may be involved in neuronal recognition mechanism. In hippocampal neurons, may regulate dendritic spine density. The polypeptide is Cadherin-2 (CDH2) (Cricetulus griseus (Chinese hamster)).